A 50-amino-acid polypeptide reads, in one-letter code: Protein PndA (50 aa).

The helical transmembrane segment at 5 to 25 threads the bilayer; it reads TFLMMLIVICVTILCFVWMVR.

Belongs to the Hok/Gef family.

It localises to the cell inner membrane. Functionally, toxic component of a type I toxin-antitoxin (TA) system. When expressed is involved in cellular Mg(2+) release and degradation of stable RNA. The polypeptide is Protein PndA (pndA) (Escherichia coli).